Consider the following 520-residue polypeptide: AMP-binding domain-containing enzyme iboA (520 aa).

ATP is bound at residue 180–191 (LTSGSTSGSPKV). Positions 397–447 (DGNFHTGDLFEKQLDGSYLFRGRGDDWIKSEDSRFIDTKAIEEKINDVCSD) match the FACS motif.

It belongs to the ATP-dependent AMP-binding enzyme family. It depends on Mg(2+) as a cofactor.

Its pathway is secondary metabolite biosynthesis. Its function is as follows. AMP-binding domain-containing enzyme; part of the gene cluster that mediates the biosynthesis of the psychoactive metabolites ibotenic acid and muscimol. The first committed step is glutamate hydroxylation by the 2-oxoglutarate-dependent dioxygenase iboH, and the last step is decarboxylation of ibotenic acid to muscimol by the decarboxylase iboD. The order of the intermediate reactions is somewhat ambiguous. IboA likely activates the carboxylic acid at position 5 to introduce an amide bond, and the flavin monooxygenase iboF generates the N-O bond. There are several options for the latter step. One option is that iboF directly hydroxylates the amide nitrogen formed by iboA to produce a hydroxamic acid species. Another option is that iboF hydroxylates an external N-containing compound, whose resulting N-O bond is subsequently introduced into the hydroxyglutamate scaffold. The paralogous PLP-dependent cystathionine gamma-synthase-like enzymes iboG1 and iboG2 are likely involved in substitution of the OH group at position 3 by the O-N moiety. The first cyclic intermediate is most probably tricholomic acid which is likely desaturated to ibotenic acid by the cytochrome P450 monooxygenase iboC. This Amanita muscaria (strain Koide BX008) protein is AMP-binding domain-containing enzyme iboA.